The following is a 564-amino-acid chain: Plant UBX domain-containing protein 8 (564 aa).

Ala-2 is modified (N-acetylalanine). A UBA-like domain is found at 2 to 44; sequence ATPNQEAIDTFISITGASDAVALQKLEEHRGDLNQAVNAYFSE. 2 UIM domains span residues 198–217 and 230–249; these read IEEEMIRAAIEASKKEAEGS and EDDDDIAIAVTMSLKSAEEE. The tract at residues 210–229 is disordered; sequence SKKEAEGSSNPLLEERPLHM. Disordered stretches follow at residues 267–358, 371–423, and 443–483; these read AVTA…EEHD, IPET…DKEM, and FLEE…QADE. Positions 291–300 are enriched in acidic residues; sequence FDDDSDDVDE. Ser-295, Ser-324, Ser-326, and Ser-328 each carry phosphoserine. A compositionally biased stretch (basic and acidic residues) spans 322–334; the sequence is DRSRSGSPEEEHA. A compositionally biased stretch (pro residues) spans 381-395; the sequence is FLPPQPRAQPRPPSP. Positions 412 to 478 form a coiled coil; it reads VASLQADRDK…DAKEASLPKE (67 aa). The span at 443–475 shows a compositional bias: basic and acidic residues; sequence FLEEEKKKEEEAQRKLEEEQELERQLDAKEASL. Residues 482 to 560 form the UBX domain; sequence DEENAITLLI…GLTSKQEALF (79 aa).

In terms of assembly, interacts with RABA5C/ARA-4.

The sequence is that of Plant UBX domain-containing protein 8 from Arabidopsis thaliana (Mouse-ear cress).